Reading from the N-terminus, the 255-residue chain is Trypsin alpha-4 (255 aa).

Residues 1–16 (MLKFVVLLCAISCALG) form the signal peptide. Residues 17-30 (AAVPEGMVPQLDGR) constitute a propeptide, activation peptide. The Peptidase S1 domain maps to 31 to 253 (IVGGVATTIS…LRTWVVSAAS (223 aa)). Cys-56 and Cys-72 are disulfide-bonded. Residues His-71 and Asp-116 each act as charge relay system in the active site. 2 cysteine pairs are disulfide-bonded: Cys-179–Cys-196 and Cys-205–Cys-229. Ser-209 serves as the catalytic Charge relay system.

Belongs to the peptidase S1 family.

The protein resides in the secreted. The protein localises to the extracellular space. The catalysed reaction is Preferential cleavage: Arg-|-Xaa, Lys-|-Xaa.. The polypeptide is Trypsin alpha-4 (Lucilia cuprina (Green bottle fly)).